The following is a 302-amino-acid chain: Acetylglutamate kinase (302 aa).

Residues 68–69 (GG), R90, and N194 each bind substrate.

This sequence belongs to the acetylglutamate kinase family. ArgB subfamily.

It localises to the cytoplasm. The enzyme catalyses N-acetyl-L-glutamate + ATP = N-acetyl-L-glutamyl 5-phosphate + ADP. Its pathway is amino-acid biosynthesis; L-arginine biosynthesis; N(2)-acetyl-L-ornithine from L-glutamate: step 2/4. Its function is as follows. Catalyzes the ATP-dependent phosphorylation of N-acetyl-L-glutamate. This chain is Acetylglutamate kinase, found in Acinetobacter baumannii (strain AB307-0294).